Reading from the N-terminus, the 59-residue chain is MNVQERFDKTIKDCKRVLKVSRKPDKQEYLEFSKIVAIGIAIIGVVGFIIVLIGELIGL.

A helical membrane pass occupies residues 35-55; sequence IVAIGIAIIGVVGFIIVLIGE.

This sequence belongs to the SecE/SEC61-gamma family. In terms of assembly, component of the Sec protein translocase complex. Heterotrimer consisting of SecY (alpha), SecG (beta) and SecE (gamma) subunits. The heterotrimers can form oligomers, although 1 heterotrimer is thought to be able to translocate proteins. Interacts with the ribosome. May interact with SecDF, and other proteins may be involved.

The protein resides in the cell membrane. Functionally, essential subunit of the Sec protein translocation channel SecYEG. Clamps together the 2 halves of SecY. May contact the channel plug during translocation. The protein is Protein translocase subunit SecE of Methanobrevibacter smithii (strain ATCC 35061 / DSM 861 / OCM 144 / PS).